A 141-amino-acid chain; its full sequence is Small ribosomal subunit protein uS12 (141 aa).

Belongs to the universal ribosomal protein uS12 family. In terms of assembly, part of the 30S ribosomal subunit.

Its function is as follows. With S4 and S5 plays an important role in translational accuracy. Located at the interface of the 30S and 50S subunits. This chain is Small ribosomal subunit protein uS12, found in Methanothermobacter thermautotrophicus (strain ATCC 29096 / DSM 1053 / JCM 10044 / NBRC 100330 / Delta H) (Methanobacterium thermoautotrophicum).